A 102-amino-acid polypeptide reads, in one-letter code: Large ribosomal subunit protein uL24 (102 aa).

Belongs to the universal ribosomal protein uL24 family. As to quaternary structure, part of the 50S ribosomal subunit.

In terms of biological role, one of two assembly initiator proteins, it binds directly to the 5'-end of the 23S rRNA, where it nucleates assembly of the 50S subunit. Its function is as follows. One of the proteins that surrounds the polypeptide exit tunnel on the outside of the subunit. This chain is Large ribosomal subunit protein uL24, found in Paraburkholderia xenovorans (strain LB400).